We begin with the raw amino-acid sequence, 344 residues long: Putative F-box/kelch-repeat protein At1g19930 (344 aa).

Residues 8–54 (TELIFSLPNDLLVNILARVSRLDYPILSLVSKRFSSVLTLPELYQTR) enclose the F-box domain. Kelch repeat units lie at residues 122–168 (NIYN…LLDG), 170–195 (IYVT…VDGK), 196–241 (LHSC…YYYY), and 243–276 (NENI…NVRL).

The protein is Putative F-box/kelch-repeat protein At1g19930 of Arabidopsis thaliana (Mouse-ear cress).